Consider the following 238-residue polypeptide: Probable 2-phosphosulfolactate phosphatase (238 aa).

This sequence belongs to the ComB family. Mg(2+) serves as cofactor.

It carries out the reaction (2R)-O-phospho-3-sulfolactate + H2O = (2R)-3-sulfolactate + phosphate. The polypeptide is Probable 2-phosphosulfolactate phosphatase (Clostridium botulinum (strain Eklund 17B / Type B)).